The chain runs to 196 residues: uncharacterized protein (196 aa).

CBS domains lie at 10-69 (ARRD…NPDE) and 76-132 (MSQP…LVAT). Residues 153 to 187 (IIEGVCDLCETYSEELRFVDGVWVCPECYEDILGR) enclose the ACP-type MB domain. Positions 158, 161, 177, and 180 each coordinate Fe cation. Residues C158, C161, C177, and C180 each coordinate Zn(2+).

This is an uncharacterized protein from Methanopyrus kandleri (strain AV19 / DSM 6324 / JCM 9639 / NBRC 100938).